Reading from the N-terminus, the 311-residue chain is MTVLWVAAVIALACLNVIQFIMKKKRDGNLAYTADQLSYMLSRDSAGQILLPTDDHALKDLLVNINLIVENRQQISAQFAKTEQSMKRMLTNMSHDLKTPLTVILGYIEAIQSDPNMPDEERERLLGKLRQKTNELIQMINSFFDLAKLESEDKEIPITKVHMNDICKRNILHYYDAVQSKGFQAAIDIPDTPVYAQANEEALDRILQNLLSNAIQYGAAGKLIGLTLSYDERNIAITVWDRGKGISETDQQRVFERLYTLEESRNKAFQGSGLGLTITKRLTEKMGGIISVQSKPYERTAFTITLKRMTY.

A helical transmembrane segment spans residues 1 to 21; sequence MTVLWVAAVIALACLNVIQFI. The Cytoplasmic portion of the chain corresponds to 22–311; that stretch reads MKKKRDGNLA…FTITLKRMTY (290 aa). The 219-residue stretch at 92–310 folds into the Histidine kinase domain; sequence NMSHDLKTPL…AFTITLKRMT (219 aa). The residue at position 95 (His-95) is a Phosphohistidine; by autocatalysis.

It is found in the cell membrane. It catalyses the reaction ATP + protein L-histidine = ADP + protein N-phospho-L-histidine.. Functionally, member of the two-component regulatory system YcbM/YcbL. Probably activates YcbL by phosphorylation. This chain is Sensor histidine kinase YcbM (ycbM), found in Bacillus subtilis (strain 168).